A 270-amino-acid polypeptide reads, in one-letter code: Urease accessory protein UreD (270 aa).

This sequence belongs to the UreD family. As to quaternary structure, ureD, UreF and UreG form a complex that acts as a GTP-hydrolysis-dependent molecular chaperone, activating the urease apoprotein by helping to assemble the nickel containing metallocenter of UreC. The complex may form in the order UreABCD, UreABCDF, UreABCDFG. The UreE protein probably delivers the nickel in a GTPase-dependent fashion.

The protein localises to the cytoplasm. In terms of biological role, necessary for the functional incorporation of the urease nickel metallocenter. This Klebsiella aerogenes (Enterobacter aerogenes) protein is Urease accessory protein UreD.